Here is a 1393-residue protein sequence, read N- to C-terminus: DNA-directed RNA polymerase subunit beta' (1393 aa).

Residues C72, C74, C87, and C90 each contribute to the Zn(2+) site. Mg(2+) is bound by residues D463, D465, and D467. Residues C812, C887, C894, and C897 each coordinate Zn(2+).

It belongs to the RNA polymerase beta' chain family. In terms of assembly, the RNAP catalytic core consists of 2 alpha, 1 beta, 1 beta' and 1 omega subunit. When a sigma factor is associated with the core the holoenzyme is formed, which can initiate transcription. Mg(2+) serves as cofactor. The cofactor is Zn(2+).

The enzyme catalyses RNA(n) + a ribonucleoside 5'-triphosphate = RNA(n+1) + diphosphate. DNA-dependent RNA polymerase catalyzes the transcription of DNA into RNA using the four ribonucleoside triphosphates as substrates. The sequence is that of DNA-directed RNA polymerase subunit beta' from Chlamydia caviae (strain ATCC VR-813 / DSM 19441 / 03DC25 / GPIC) (Chlamydophila caviae).